Consider the following 135-residue polypeptide: MKAFSPVRSVRKSSLTEHSLGIARSKAPVDEPMSLLYNMNDCYSKLKELVPSIPPNKKVSKMEILQHVIDYILDLQLTLDSHPTLVSLHHHHLSRVGGNTSRTPLTALNTDISILSLQAVELSSEFTDESKSLCP.

One can recognise a bHLH domain in the interval 23 to 75 (ARSKAPVDEPMSLLYNMNDCYSKLKELVPSIPPNKKVSKMEILQHVIDYILDL). The short motif at 108 to 117 (LNTDISILSL) is the Nuclear export signal element.

In terms of assembly, heterodimer with other HLH proteins.

Its subcellular location is the cytoplasm. The protein resides in the nucleus. In terms of biological role, transcriptional regulator (lacking a basic DNA binding domain) which negatively regulates the basic helix-loop-helix (bHLH) transcription factors by forming heterodimers and inhibiting their DNA binding and transcriptional activity. Inhibits the activity of both neurogenic (neurod1/neuroD) and myogenic (myod1/myoD) bHLH factors. May play a role in the regulation of the circadian clock. The chain is DNA-binding protein inhibitor ID-2-B (id2-b) from Xenopus laevis (African clawed frog).